A 219-amino-acid chain; its full sequence is Aspartic protease inhibitor 10 (219 aa).

The N-terminal stretch at 1 to 23 is a signal peptide; sequence MMKCLFLLCLCLVPIVVFSSTFT. The propeptide occupies 24–32; it reads SQNLIDLPS. Positions 26-31 match the Vacuolar targeting signal motif; sequence NLIDLP. A glycan (N-linked (GlcNAc...) asparagine) is linked at N51. 2 disulfide bridges follow: C80–C125 and C173–C184.

It belongs to the protease inhibitor I3 (leguminous Kunitz-type inhibitor) family. As to expression, in tubers and green buds of untreated plants. After abscisic acid treatment or mechanical wounding is mostly accumulated in leaves, to a lesser extent in stems, but not in roots.

Its function is as follows. Inhibitor of cathepsin D (aspartic protease) and trypsin (serine protease). Protects the plant by inhibiting proteases of invading organisms. This Solanum tuberosum (Potato) protein is Aspartic protease inhibitor 10 (CDI).